A 310-amino-acid polypeptide reads, in one-letter code: Protein FIP2 (310 aa).

The segment at 1 to 58 is disordered; the sequence is MGFAPVTPAAVETYDPDVDHDDESNGLDGFRVRSKRSGKFSGGYSDSPREVGDGYGVR. Acidic residues predominate over residues 14-25; it reads YDPDVDHDDESN. S77 and S105 each carry phosphoserine. Disordered regions lie at residues 115–135, 152–171, and 177–221; these read ATRLRTHGKPSSGDFSHGSGG, FKPKNFSKPEPNFSQDLDYD, and DRAE…GSSS. Polar residues predominate over residues 208 to 221; sequence PRNTGASNGYGSSS.

In terms of assembly, interacts with FRI. Interacts with WAV3.

The sequence is that of Protein FIP2 from Arabidopsis thaliana (Mouse-ear cress).